Consider the following 1420-residue polypeptide: tRNA (32-2'-O)-methyltransferase regulator TRM732 (1420 aa).

A required for activity region spans residues 748–754 (RRSGGLP).

The protein belongs to the THADA family. As to quaternary structure, interacts with TRM7; for 2'-O-methylation of position 32 in substrate tRNAs.

It localises to the cytoplasm. Functionally, together with methyltransferase TRM7, methylates the 2'-O-ribose of nucleotides at position 32 of the anticodon loop of substrate tRNAs. This is tRNA (32-2'-O)-methyltransferase regulator TRM732 (TRM732) from Saccharomyces cerevisiae (strain ATCC 204508 / S288c) (Baker's yeast).